The following is a 316-amino-acid chain: Pantothenate kinase (316 aa).

95-102 (GSVAVGKS) contributes to the ATP binding site.

This sequence belongs to the prokaryotic pantothenate kinase family.

The protein localises to the cytoplasm. The enzyme catalyses (R)-pantothenate + ATP = (R)-4'-phosphopantothenate + ADP + H(+). It functions in the pathway cofactor biosynthesis; coenzyme A biosynthesis; CoA from (R)-pantothenate: step 1/5. This is Pantothenate kinase from Serratia proteamaculans (strain 568).